A 529-amino-acid chain; its full sequence is Corneodesmosin (529 aa).

A signal peptide spans 1–32; the sequence is MGSSRAPWMGRVGGHGMMALLLAGLLLPGTLA. Disordered stretches follow at residues 38-248 and 383-492; these read FSDP…SVSG and GSTG…SSAG. 6 stretches are compositionally biased toward low complexity: residues 58–83, 90–100, 111–175, 189–231, 392–408, and 426–441; these read GKGDSSGFSSYSGSSSSGSSISSARS, GSSSGSSIAQG, GYSQ…NGSA, PSQP…SGGP, SPSSSRVPSSSSISSSS, and PGTGSFSSSSSSQSSG. N172 carries N-linked (GlcNAc...) asparagine glycosylation. The span at 449 to 467 shows a compositional bias: polar residues; that stretch reads GSKSSSSGHPCMSVSSLTL.

It is found in the secreted. Functionally, important for the epidermal barrier integrity. The protein is Corneodesmosin (CDSN) of Pan troglodytes (Chimpanzee).